The chain runs to 277 residues: MEMO1 family protein TRQ2_0860 (277 aa).

It belongs to the MEMO1 family.

This Thermotoga sp. (strain RQ2) protein is MEMO1 family protein TRQ2_0860.